The primary structure comprises 301 residues: Acetylglutamate kinase (301 aa).

Residues 68-69 (GG), arginine 90, and asparagine 195 contribute to the substrate site.

This sequence belongs to the acetylglutamate kinase family. ArgB subfamily.

It is found in the cytoplasm. It catalyses the reaction N-acetyl-L-glutamate + ATP = N-acetyl-L-glutamyl 5-phosphate + ADP. It functions in the pathway amino-acid biosynthesis; L-arginine biosynthesis; N(2)-acetyl-L-ornithine from L-glutamate: step 2/4. Its function is as follows. Catalyzes the ATP-dependent phosphorylation of N-acetyl-L-glutamate. This chain is Acetylglutamate kinase, found in Pseudomonas putida (strain W619).